A 287-amino-acid chain; its full sequence is Large ribosomal subunit protein uL2 (287 aa).

Disordered stretches follow at residues 25–57 (TKTEPEKSLTTSKHRAKGRNNTGRITSRRRGGG) and 203–287 (LSAG…GRES). Composition is skewed to basic residues over residues 209-220 (GRNRWKGRRPKV) and 259-287 (TRNRKKLSSKFIVRRRRKSSKRGRGGRES).

Belongs to the universal ribosomal protein uL2 family. Part of the 50S ribosomal subunit. Forms a bridge to the 30S subunit in the 70S ribosome.

In terms of biological role, one of the primary rRNA binding proteins. Required for association of the 30S and 50S subunits to form the 70S ribosome, for tRNA binding and peptide bond formation. It has been suggested to have peptidyltransferase activity; this is somewhat controversial. Makes several contacts with the 16S rRNA in the 70S ribosome. This Nostoc punctiforme (strain ATCC 29133 / PCC 73102) protein is Large ribosomal subunit protein uL2.